The sequence spans 300 residues: Putative S-adenosyl-L-methionine-dependent methyltransferase MUL_0817 (300 aa).

Residues aspartate 127 and 156–157 contribute to the S-adenosyl-L-methionine site; that span reads DL.

This sequence belongs to the UPF0677 family.

Exhibits S-adenosyl-L-methionine-dependent methyltransferase activity. The polypeptide is Putative S-adenosyl-L-methionine-dependent methyltransferase MUL_0817 (Mycobacterium ulcerans (strain Agy99)).